A 65-amino-acid chain; its full sequence is Metallothionein (65 aa).

Belongs to the metallothionein superfamily. Type 4 family.

In terms of biological role, metallothioneins have a high content of cysteine residues that bind various heavy metals. In Paracentrotus lividus (Common sea urchin), this protein is Metallothionein.